A 208-amino-acid polypeptide reads, in one-letter code: Methylthioribulose-1-phosphate dehydratase (208 aa).

2 residues coordinate Zn(2+): His-101 and His-103.

It belongs to the aldolase class II family. MtnB subfamily. The cofactor is Zn(2+).

The catalysed reaction is 5-(methylsulfanyl)-D-ribulose 1-phosphate = 5-methylsulfanyl-2,3-dioxopentyl phosphate + H2O. It functions in the pathway amino-acid biosynthesis; L-methionine biosynthesis via salvage pathway; L-methionine from S-methyl-5-thio-alpha-D-ribose 1-phosphate: step 2/6. Its function is as follows. Catalyzes the dehydration of methylthioribulose-1-phosphate (MTRu-1-P) into 2,3-diketo-5-methylthiopentyl-1-phosphate (DK-MTP-1-P). The sequence is that of Methylthioribulose-1-phosphate dehydratase from Gluconobacter oxydans (strain 621H) (Gluconobacter suboxydans).